The following is a 461-amino-acid chain: V-type ATP synthase beta chain (461 aa).

The protein belongs to the ATPase alpha/beta chains family.

In terms of biological role, produces ATP from ADP in the presence of a proton gradient across the membrane. The V-type beta chain is a regulatory subunit. The polypeptide is V-type ATP synthase beta chain (Streptococcus pneumoniae serotype 19F (strain G54)).